A 154-amino-acid chain; its full sequence is Leghemoglobin-1 (154 aa).

The Globin domain occupies 3–151; it reads VLTDVQVALV…LAIIIKKEMK (149 aa). Position 46 (S46) interacts with heme b. S46 carries the phosphoserine modification. H64 is a binding site for O2. Residues K67, H98, and K101 each contribute to the heme b site. Residue Y139 is modified to Nitrated tyrosine.

The protein belongs to the plant globin family. As to quaternary structure, monomer. Nitrated in effective nodules and particularly in hypoxic conditions; this mechanism may play a protective role in the symbiosis by buffering toxic peroxynitrite NO(2)(-). Nitration level decrease during nodule senescence. Post-translationally, phosphorylation at Ser-46 disrupts the molecular environment of its porphyrin ring oxygen binding pocket, thus leading to a reduced oxygen consumption and to the delivery of oxygen O(2) to symbiosomes. In terms of tissue distribution, accumulates in developing root nodules and present in roots, especially in the upper part. Detected in leaves at low levels.

The protein localises to the cytoplasm. It is found in the cytosol. Its subcellular location is the nucleus. Functionally, leghemoglobin that reversibly binds oxygen O(2) through a pentacoordinated heme iron. In root nodules, facilitates the diffusion of oxygen to the bacteroids while preventing the bacterial nitrogenase from being inactivated by buffering dioxygen, nitric oxide and carbon monoxide, and promoting the formation of reactive oxygen species (ROS, e.g. H(2)O(2)). This role is essential for symbiotic nitrogen fixation (SNF). The protein is Leghemoglobin-1 of Lupinus luteus (European yellow lupine).